A 608-amino-acid chain; its full sequence is MATVIAAHFVSRSSHLSIHALETKANNLSHTGPWTQTITPNGLRSLNTMDKLQMKTQSKAVKKVSATGNGRPAAKIICGHGMNLIFVGAEVGPWSKTGGLGDVLGGLPPAMAARGHRVMTVSPRYDQYKDAWDTSVSVEIKIGDRIETVRFFHSYKRGVDRVFVDHPMFLEKVWGKTGSKIYGPRAGLDYQDNQLRFSLLCLAALEAPRVLNLNSSKNFSGPYGEEVAFIANDWHTALLPCYLKAIYQPMGIYKHAKVAFCIHNIAYQGRFAFSDFPRLNLPDKFKSSFDFIDGYEKPVKGRKINWMKAGILESDRVLTVSPYYAQEVISGVERGVELDNFIRKTGIAGIINGMDVQEWNPVTDKYIDIHYDATTVMDAKPLLKEALQAEVGLPVDRNVPLIGFIGRLEEQKGSDIFVAAISQLVEHNVQIVILGTGKKKFEKQIEHLEVLYPDKARGVAKFNVPLAHMITAGADFMLVPSRFEPCGLIQLHAMRYGTVPIVASTGGLVDTVKEGYTGFQMGALHVECDKIDSADVAAIVKTVARALGTYATAALREMILNCMAQDLSWKGPARMWEKMLLDLEVTGSEPGTEGEEIAPLAKENVPTP.

The N-terminal 78 residues, Met1–Cys78, are a transit peptide targeting the chloroplast. An ADP-alpha-D-glucose-binding site is contributed by Lys96. The disordered stretch occupies residues Gly587 to Pro608.

It belongs to the glycosyltransferase 1 family. Bacterial/plant glycogen synthase subfamily. Synthesized in a number of different organs, but most abundantly in tubers.

It localises to the plastid. Its subcellular location is the chloroplast. It is found in the amyloplast. The enzyme catalyses an NDP-alpha-D-glucose + [(1-&gt;4)-alpha-D-glucosyl](n) = [(1-&gt;4)-alpha-D-glucosyl](n+1) + a ribonucleoside 5'-diphosphate + H(+). The protein operates within glycan biosynthesis; starch biosynthesis. In terms of biological role, responsible for the synthesis of amylose in reserve starch. In Manihot esculenta (Cassava), this protein is Granule-bound starch synthase 1, chloroplastic/amyloplastic (WAXY).